Reading from the N-terminus, the 130-residue chain is Small ribosomal subunit protein uS8 (130 aa).

The protein belongs to the universal ribosomal protein uS8 family. As to quaternary structure, component of the 40S ribosomal subunit. Part of the small subunit (SSU) processome, composed of more than 70 proteins and the RNA chaperone small nucleolar RNA (snoRNA) U3.

It localises to the cytoplasm. It is found in the nucleus. Its subcellular location is the nucleolus. Component of the small ribosomal subunit. Part of the small subunit (SSU) processome, first precursor of the small eukaryotic ribosomal subunit. During the assembly of the SSU processome in the nucleolus, many ribosome biogenesis factors, an RNA chaperone and ribosomal proteins associate with the nascent pre-rRNA and work in concert to generate RNA folding, modifications, rearrangements and cleavage as well as targeted degradation of pre-ribosomal RNA by the RNA exosome. Required for erythropoiesis during embryonic development. The protein is Small ribosomal subunit protein uS8 of Danio rerio (Zebrafish).